A 461-amino-acid polypeptide reads, in one-letter code: D-phenylhydantoinase (461 aa).

A divalent metal cation is bound by residues histidine 59, histidine 61, and lysine 151. Position 151 is an N6-carboxylysine (lysine 151). Tyrosine 156 serves as a coordination point for substrate. Histidine 182 and histidine 239 together coordinate a divalent metal cation. Serine 286 contacts substrate. An a divalent metal cation-binding site is contributed by aspartate 313. Asparagine 335 is a substrate binding site.

This sequence belongs to the metallo-dependent hydrolases superfamily. Hydantoinase/dihydropyrimidinase family. As to quaternary structure, homotetramer. A divalent metal cation is required as a cofactor. Post-translationally, carboxylation allows a single lysine to coordinate two divalent metal cations.

It carries out the reaction D-5-phenylhydantoin + H2O = N-carbamoyl-D-phenylglycine + H(+). Catalyzes the stereospecific hydrolysis of the cyclic amide bond of D-hydantoin derivatives with an aromatic side chains at the 5'-position. Has no activity on dihydropyrimidines. The physiological function is unknown. This Escherichia coli O9:H4 (strain HS) protein is D-phenylhydantoinase.